The chain runs to 538 residues: Bifunctional purine biosynthesis protein PurH (538 aa).

Positions 6-158 (KHIPAPDLHR…KNHAYVATVV (153 aa)) constitute an MGS-like domain.

Belongs to the PurH family.

The catalysed reaction is (6R)-10-formyltetrahydrofolate + 5-amino-1-(5-phospho-beta-D-ribosyl)imidazole-4-carboxamide = 5-formamido-1-(5-phospho-D-ribosyl)imidazole-4-carboxamide + (6S)-5,6,7,8-tetrahydrofolate. It carries out the reaction IMP + H2O = 5-formamido-1-(5-phospho-D-ribosyl)imidazole-4-carboxamide. The protein operates within purine metabolism; IMP biosynthesis via de novo pathway; 5-formamido-1-(5-phospho-D-ribosyl)imidazole-4-carboxamide from 5-amino-1-(5-phospho-D-ribosyl)imidazole-4-carboxamide (10-formyl THF route): step 1/1. It participates in purine metabolism; IMP biosynthesis via de novo pathway; IMP from 5-formamido-1-(5-phospho-D-ribosyl)imidazole-4-carboxamide: step 1/1. The polypeptide is Bifunctional purine biosynthesis protein PurH (Brucella melitensis biotype 2 (strain ATCC 23457)).